The primary structure comprises 339 residues: Biotin synthase (339 aa).

A Radical SAM core domain is found at 53–271 (NAIQMSRLLS…IALARILMPR (219 aa)). 3 residues coordinate [4Fe-4S] cluster: C68, C72, and C75. Residues C112, C143, C203, and R275 each coordinate [2Fe-2S] cluster.

This sequence belongs to the radical SAM superfamily. Biotin synthase family. In terms of assembly, homodimer. Requires [4Fe-4S] cluster as cofactor. [2Fe-2S] cluster serves as cofactor.

The enzyme catalyses (4R,5S)-dethiobiotin + (sulfur carrier)-SH + 2 reduced [2Fe-2S]-[ferredoxin] + 2 S-adenosyl-L-methionine = (sulfur carrier)-H + biotin + 2 5'-deoxyadenosine + 2 L-methionine + 2 oxidized [2Fe-2S]-[ferredoxin]. Its pathway is cofactor biosynthesis; biotin biosynthesis; biotin from 7,8-diaminononanoate: step 2/2. Catalyzes the conversion of dethiobiotin (DTB) to biotin by the insertion of a sulfur atom into dethiobiotin via a radical-based mechanism. The sequence is that of Biotin synthase from Agrobacterium fabrum (strain C58 / ATCC 33970) (Agrobacterium tumefaciens (strain C58)).